Here is a 159-residue protein sequence, read N- to C-terminus: Transcriptional repressor NrdR (159 aa).

The segment at 1-21 (MRCPKCQHNKSNVIDSRQAED) is disordered. A zinc finger spans residues 3–34 (CPKCQHNKSNVIDSRQAEDGNTIRRRRECDAC). Positions 49–139 (LLVVKKDGTR…VYRSFKDVDE (91 aa)) constitute an ATP-cone domain.

This sequence belongs to the NrdR family. Requires Zn(2+) as cofactor.

In terms of biological role, negatively regulates transcription of bacterial ribonucleotide reductase nrd genes and operons by binding to NrdR-boxes. The chain is Transcriptional repressor NrdR from Streptococcus thermophilus (strain ATCC BAA-491 / LMD-9).